Consider the following 163-residue polypeptide: Nucleotide-binding protein YajQ (163 aa).

This sequence belongs to the YajQ family.

Nucleotide-binding protein. In Salmonella heidelberg (strain SL476), this protein is Nucleotide-binding protein YajQ.